The sequence spans 421 residues: Histidine--tRNA ligase (421 aa).

Belongs to the class-II aminoacyl-tRNA synthetase family. As to quaternary structure, homodimer.

The protein localises to the cytoplasm. It catalyses the reaction tRNA(His) + L-histidine + ATP = L-histidyl-tRNA(His) + AMP + diphosphate + H(+). This is Histidine--tRNA ligase from Francisella tularensis subsp. novicida (strain U112).